The sequence spans 142 residues: Peptide methionine sulfoxide reductase MsrB (142 aa).

The MsrB domain occupies 2 to 125 (IKKNKNDLNE…NSAAVQFIPY (124 aa)). Cysteine 114 serves as the catalytic Nucleophile.

Belongs to the MsrB Met sulfoxide reductase family.

It catalyses the reaction L-methionyl-[protein] + [thioredoxin]-disulfide + H2O = L-methionyl-(R)-S-oxide-[protein] + [thioredoxin]-dithiol. The polypeptide is Peptide methionine sulfoxide reductase MsrB (Staphylococcus saprophyticus subsp. saprophyticus (strain ATCC 15305 / DSM 20229 / NCIMB 8711 / NCTC 7292 / S-41)).